An 89-amino-acid chain; its full sequence is Small ribosomal subunit protein uS15 (89 aa).

It belongs to the universal ribosomal protein uS15 family. As to quaternary structure, part of the 30S ribosomal subunit. Forms a bridge to the 50S subunit in the 70S ribosome, contacting the 23S rRNA.

Functionally, one of the primary rRNA binding proteins, it binds directly to 16S rRNA where it helps nucleate assembly of the platform of the 30S subunit by binding and bridging several RNA helices of the 16S rRNA. Forms an intersubunit bridge (bridge B4) with the 23S rRNA of the 50S subunit in the ribosome. In Acinetobacter baumannii (strain AB307-0294), this protein is Small ribosomal subunit protein uS15.